The following is a 355-amino-acid chain: Replication-associated protein (355 aa).

One can recognise a CRESS-DNA virus Rep endonuclease domain in the interval 11–114; it reads SHRNVNTFLT…PLAVFERGTF (104 aa). The RCR-1 signature appears at 18-21; sequence FLTY. A divalent metal cation-binding residues include E52, H60, and H62. The short motif at 60 to 62 is the RCR-2 element; sequence HLH. Y100 (for DNA cleavage activity) is an active-site residue. The short motif at 100 to 103 is the RCR-3 element; that stretch reads YILK. E104 serves as a coordination point for a divalent metal cation. The span at 119-128 shows a compositional bias: polar residues; that stretch reads SSFQGNPSKG. The disordered stretch occupies residues 119–138; it reads SSFQGNPSKGNSEKKPSKDE. Basic and acidic residues predominate over residues 129–138; it reads NSEKKPSKDE. The tract at residues 175–187 is oligomerization; it reads SANKLFPEIQEEF. 229–236 provides a ligand contact to ATP; it reads GPTRTGKS. The transactivation stretch occupies residues 252–270; sequence VDWSSYNEDAIYNIVDDIP. Positions 292 to 303 match the Nuclear localization signal motif; it reads KYGKKKKVQMKS.

The protein belongs to the geminiviridae Rep protein family. As to quaternary structure, homooligomer. Rep binds to repeated DNA motifs (iterons). Forms the O-complex, which is a Rep-DNA complex involved in the initiation of RCR. Part of the C- and V-complexes which are RepA-Rep-DNA complexes involved in the c-sense and v-sense transcription. Requires Mg(2+) as cofactor. It depends on Mn(2+) as a cofactor.

It localises to the host nucleus. In terms of biological role, essential for the replication of viral ssDNA. The closed circular ssDNA genome is first converted to a superhelical dsDNA. Rep binds a specific region at the genome origin of replication. It introduces an endonucleolytic nick within the conserved sequence 5'-TAATATTAC-3' in the intergenic region of the genome present in all geminiviruses, thereby initiating the rolling circle replication (RCR). Following cleavage, binds covalently to the 5'-phosphate of DNA as a tyrosyl ester. The cleavage gives rise to a free 3'-OH that serves as a primer for the cellular DNA polymerase. The polymerase synthesizes the (+) strand DNA by rolling circle mechanism. After one round of replication, a Rep-catalyzed nucleotidyl transfer reaction releases a circular single-stranded virus genome, thereby terminating the replication. Displays origin-specific DNA cleavage, nucleotidyl transferase, ATPase and helicase activities. Acts as an inhibitor of C-sense gene transcription. The sequence is that of Replication-associated protein from Maize streak virus genotype B (isolate Tas) (MSV).